We begin with the raw amino-acid sequence, 360 residues long: NAD(P)H-quinone oxidoreductase subunit 1, chloroplastic (360 aa).

The next 8 membrane-spanning stretches (helical) occupy residues 29–49, 96–116, 128–148, 166–186, 204–224, 255–277, 297–317, and 333–353; these read WIPLPILVVIVGATIGVLVIV, IWLFTLGPALVVIPVFLAYLV, ISLGVFFWIAISSIAPIGLLM, AAQAISYEIPLSLCVLAICLL, ILGWNVWRQPIGFVSFLIAAL, GLFYVGSYVNLLLSSLFATILYL, IFAAFLGIGMTLLKAYLFIFL, and LLDLGWKFLLPISLGNLLLTA.

The protein belongs to the complex I subunit 1 family. As to quaternary structure, NDH is composed of at least 16 different subunits, 5 of which are encoded in the nucleus.

It is found in the plastid. The protein localises to the chloroplast thylakoid membrane. The enzyme catalyses a plastoquinone + NADH + (n+1) H(+)(in) = a plastoquinol + NAD(+) + n H(+)(out). It carries out the reaction a plastoquinone + NADPH + (n+1) H(+)(in) = a plastoquinol + NADP(+) + n H(+)(out). NDH shuttles electrons from NAD(P)H:plastoquinone, via FMN and iron-sulfur (Fe-S) centers, to quinones in the photosynthetic chain and possibly in a chloroplast respiratory chain. The immediate electron acceptor for the enzyme in this species is believed to be plastoquinone. Couples the redox reaction to proton translocation, and thus conserves the redox energy in a proton gradient. In Chlorokybus atmophyticus (Soil alga), this protein is NAD(P)H-quinone oxidoreductase subunit 1, chloroplastic.